Consider the following 226-residue polypeptide: Endonuclease NucS (226 aa).

This sequence belongs to the NucS endonuclease family.

It localises to the cytoplasm. Its function is as follows. Cleaves both 3' and 5' ssDNA extremities of branched DNA structures. This is Endonuclease NucS from Mycobacterium tuberculosis (strain CDC 1551 / Oshkosh).